Here is a 333-residue protein sequence, read N- to C-terminus: 2-oxoglutarate-dependent dioxygenase ucsF (333 aa).

Residues 174-296 (NASELRLNHY…RYSIAYLCKA (123 aa)) enclose the Fe2OG dioxygenase domain. The Fe cation site is built by His-202, Asp-204, and His-264. Residue Arg-287 participates in 2-oxoglutarate binding.

The protein belongs to the iron/ascorbate-dependent oxidoreductase family. Fe(2+) serves as cofactor.

The protein operates within mycotoxin biosynthesis. Its function is as follows. 2-oxoglutarate-dependent dioxygenase; part of the gene cluster that mediates the biosynthesis of UCS1025A, a member of the pyrrolizidinone family that acts as a strong telomerase inhibitor and displays potent antibacterial and antitumor properties. These compounds share a hemiaminal-containing pyrrolizidinone core fused with a gamma-lactone, giving a furopyrrolizidine that is connected to a decalin fragment. The polyketide synthase module (PKS) of the PKS-NRPS ucsA is responsible for the synthesis of the polyketide backbone via the condensation of an acetyl-CoA starter unit with 6 malonyl-CoA units. The downstream nonribosomal peptide synthetase (NRPS) module then amidates the carboxyl end of the polyketide with a 2S,3S-methylproline derived from L-isoleucine by the 2-oxoglutarate-dependent dioxygenase ucsF which converts L-isoleucine to (4S,5S)-4-methylpyrroline-5-carboxylate that is further converted to 2S,3S-methylproline by the pyrroline-5-carboxylate reductase ucsG. Reductive release of the completed aminoacyl polyketide from the assembly line can form the 3-pyrrolin-2-one structure via an intramolecular Knoevenagel reaction. Because ucsA lacks a designated enoylreductase (ER) domain, the required activity is provided the enoyl reductase ucsL. This keto acyclic precursor is the substrate of the Diels-Alderase ucsH, that catalyzes the Diels-Alder cycloaddition. Oxidation of the 3S-methyl group to a carboxylate by the cytochrome P450 monooxygenase ucsK allows an oxa-Michael cyclization that might involve the reductase/dehydrogenase ucsI and which furnishes the furopyrrolizidine. The oxidase ucsJ likely plays a critical role in stereoselective reduction of the C5-C6 double bond to afford the required R-configured carboxylate group. Further enolization and oxidation at C5 by an unidentified enzyme affords the last intermediate that can undergo oxa-Michael cyclization to yield UCS1025A. The chain is 2-oxoglutarate-dependent dioxygenase ucsF from Acremonium sp.